Reading from the N-terminus, the 126-residue chain is Holo-[acyl-carrier-protein] synthase (126 aa).

Positions 9 and 58 each coordinate Mg(2+).

The protein belongs to the P-Pant transferase superfamily. AcpS family. Mg(2+) is required as a cofactor.

Its subcellular location is the cytoplasm. It carries out the reaction apo-[ACP] + CoA = holo-[ACP] + adenosine 3',5'-bisphosphate + H(+). Its function is as follows. Transfers the 4'-phosphopantetheine moiety from coenzyme A to a Ser of acyl-carrier-protein. The protein is Holo-[acyl-carrier-protein] synthase of Salmonella agona (strain SL483).